The sequence spans 299 residues: Bifunctional protein FolD (299 aa).

Residues 168-170 (GRS), Ser-193, and Ile-234 each bind NADP(+).

It belongs to the tetrahydrofolate dehydrogenase/cyclohydrolase family. In terms of assembly, homodimer.

It catalyses the reaction (6R)-5,10-methylene-5,6,7,8-tetrahydrofolate + NADP(+) = (6R)-5,10-methenyltetrahydrofolate + NADPH. The catalysed reaction is (6R)-5,10-methenyltetrahydrofolate + H2O = (6R)-10-formyltetrahydrofolate + H(+). Its pathway is one-carbon metabolism; tetrahydrofolate interconversion. Its function is as follows. Catalyzes the oxidation of 5,10-methylenetetrahydrofolate to 5,10-methenyltetrahydrofolate and then the hydrolysis of 5,10-methenyltetrahydrofolate to 10-formyltetrahydrofolate. This Brucella abortus (strain S19) protein is Bifunctional protein FolD.